The chain runs to 484 residues: Endoglucanase 9 (484 aa).

The first 21 residues, 1 to 21 (MTSLFFFVLLFSSLLISNGDA), serve as a signal peptide directing secretion. Asp-77 functions as the Nucleophile in the catalytic mechanism. Active-site residues include His-402, Asp-453, and Glu-462.

Belongs to the glycosyl hydrolase 9 (cellulase E) family. As to expression, specifically expressed in root cap cells.

The protein localises to the secreted. The protein resides in the cell wall. The catalysed reaction is Endohydrolysis of (1-&gt;4)-beta-D-glucosidic linkages in cellulose, lichenin and cereal beta-D-glucans.. The chain is Endoglucanase 9 (CEL3) from Arabidopsis thaliana (Mouse-ear cress).